A 1360-amino-acid polypeptide reads, in one-letter code: MAYSYTEKKRIRKDFGKLPNVMEVPYLLAIQLDSYRKFTQADRPADERLDIGLQAAFKSVFPIVSYSGNAALEYVSYALGKPVFDVSECVLRGATYAVPLRVKVRLIIYDRESSSKAIKDIKEQEVYMGEIPLMTDNGTFVINGTERVIVSQLHRSPGVFFEHDKGKTHSSGKLLYSARVIPYRGSWLDFEFDPKDLVYVRIDRRRKLPATILLRALGYSAEEMLDMFFETSRVFLAEDNIKLELVPSRLRGEVTTFEIKDADGNVIVEDGRRITARHIRQLEKSNVTELQVPAEYVLGKALANNVIDTNTGEVLFECNSEITEEVLEGLRSANVSEFQILYTNDLDCGPFLSDTLRTDPTRTELEALVEIYRMMRPGEPPTKESAEGLFQNLFFSNERYDLSAVGRMKFNRRLGRDEETGEGTLSREDIVDVLRTLISIRNGQGTVDDIDHLGNRRVRSVGEMAENQFRVGLVRVERAVKERLSMAESEGLMPQDLINAKPVAAAVKEFFGSSQLSQFMDQNNPLSEITHKRRVSALGPGGLTRERAGFEVRDVHPTHYGRVCPIETPEGPNIGLINSLATYARTNNYGFLESPHRKVVDGKVTDEIEYLSAINESQYVIAQASAATDGEGRLTDDLVSVRYQNEFTLKAAADVQYMDVSPRQVVSVAASLIPFLEHDDANRALMGSNMQRQAVPTLKADKPVVGTGMERNVARDSGVCVVAKRGGKIESVDAGRIVVRVADEETPAGDAGVDIYNLIKYTRSNQNTCINQRPIVGPGDSISRGDILADGPSVDLGELALGQNMRIAFMTWNGYNFEDSILVSERVVQEDRFTTIHIQELTCIARDTKLGSEEITADIPNVGEGALAKLDESGIVYVGAEVGAGDILVGKVTPKGETQLTPEEKLLRAIFGEKASDVKDTSLRVPSSVKGTVIDVQVFTRDGLEKDQRSLDIEKAQLDQVRKDLNEEYRIVEGATFARLRSSLVGNLASSGKGVKKGEAVTDEMLNAIDRDDWFKVRMADDALNEQLDLAEQQLVERRKELDERFEDKKRKLATGDDLAPGVLKIVKVYLAIKRRIQPGDKMAGRHGNKGVISVIMPVEDMPYDENGEPIDIVLNPLGVPSRMNVGQILETHLGLASKGLGRKIDNMVKQQREIAELRKFLGEIYNEIGQGYKIEDLDSFSDEEILELARNLRGGVPMATRAFDGAAESEIKALLKLADLPESGQMSLFDGRTGDAFMRPVTVGYMYMLKLNHLVDDKMHARSTGSYSLVTQQPLGGKAQFGGQRFGEMEVWALEAYGAAYTLQEMLTVKSDDVNGRTKMYKNIVDGDHRMEPGMPESFNVLVKEIRSLGINIELEQDS.

The protein belongs to the RNA polymerase beta chain family. The RNAP catalytic core consists of 2 alpha, 1 beta, 1 beta' and 1 omega subunit. When a sigma factor is associated with the core the holoenzyme is formed, which can initiate transcription.

The catalysed reaction is RNA(n) + a ribonucleoside 5'-triphosphate = RNA(n+1) + diphosphate. Its function is as follows. DNA-dependent RNA polymerase catalyzes the transcription of DNA into RNA using the four ribonucleoside triphosphates as substrates. The sequence is that of DNA-directed RNA polymerase subunit beta from Teredinibacter turnerae (strain ATCC 39867 / T7901).